The chain runs to 113 residues: Large ribosomal subunit protein uL24 (113 aa).

It belongs to the universal ribosomal protein uL24 family. As to quaternary structure, part of the 50S ribosomal subunit.

Functionally, one of two assembly initiator proteins, it binds directly to the 5'-end of the 23S rRNA, where it nucleates assembly of the 50S subunit. Its function is as follows. One of the proteins that surrounds the polypeptide exit tunnel on the outside of the subunit. The sequence is that of Large ribosomal subunit protein uL24 from Micrococcus luteus (Micrococcus lysodeikticus).